Here is a 575-residue protein sequence, read N- to C-terminus: Dual specificity protein phosphatase YVH1 (575 aa).

Positions 185-213 are disordered; sequence KHNNNNNNNNNNNNNNNNNNNNNNCCTFK. Over residues 187–208 the composition is skewed to low complexity; it reads NNNNNNNNNNNNNNNNNNNNNN. Positions 283 to 435 constitute a Tyrosine-protein phosphatase domain; that stretch reads NYKINQEEDT…LLLYEKMNYT (153 aa). The active-site Phosphocysteine intermediate is the cysteine 379. The Zn(2+) site is built by cysteine 476 and cysteine 530.

The protein belongs to the protein-tyrosine phosphatase family. Non-receptor class dual specificity subfamily. In terms of assembly, interacts with PES. Zn(2+) is required as a cofactor.

Its subcellular location is the cytoplasm. The protein localises to the nucleus. It carries out the reaction O-phospho-L-tyrosyl-[protein] + H2O = L-tyrosyl-[protein] + phosphate. It catalyses the reaction O-phospho-L-seryl-[protein] + H2O = L-seryl-[protein] + phosphate. Its function is as follows. Dual specificity protein phosphatase which dephosphorylates both phosphotyrosine and phosphoserine residues. The protein is Dual specificity protein phosphatase YVH1 of Plasmodium falciparum (isolate 3D7).